A 135-amino-acid polypeptide reads, in one-letter code: 6-pyruvoyl tetrahydrobiopterin synthase (135 aa).

His17 is a binding site for Zn(2+). Cys36 serves as the catalytic Proton acceptor. 2 residues coordinate Zn(2+): His40 and His42. Active-site charge relay system residues include His81 and Glu124.

Belongs to the PTPS family. As to quaternary structure, homohexamer formed of two homotrimers in a head to head fashion. It depends on Zn(2+) as a cofactor.

It catalyses the reaction 7,8-dihydroneopterin 3'-triphosphate = 6-pyruvoyl-5,6,7,8-tetrahydropterin + triphosphate + H(+). It participates in cofactor biosynthesis; tetrahydrobiopterin biosynthesis; tetrahydrobiopterin from 7,8-dihydroneopterin triphosphate: step 1/3. Involved in the biosynthesis of tetrahydrobiopterin, an essential cofactor of aromatic amino acid hydroxylases. Catalyzes the transformation of 7,8-dihydroneopterin triphosphate into 6-pyruvoyl tetrahydropterin. The protein is 6-pyruvoyl tetrahydrobiopterin synthase (ptsA) of Dictyostelium discoideum (Social amoeba).